Reading from the N-terminus, the 166-residue chain is Endoribonuclease YbeY (166 aa).

Residues H132, H136, and H142 each coordinate Zn(2+).

It belongs to the endoribonuclease YbeY family. It depends on Zn(2+) as a cofactor.

It is found in the cytoplasm. Functionally, single strand-specific metallo-endoribonuclease involved in late-stage 70S ribosome quality control and in maturation of the 3' terminus of the 16S rRNA. This Clostridium botulinum (strain Kyoto / Type A2) protein is Endoribonuclease YbeY.